The following is a 454-amino-acid chain: uncharacterized protein (454 aa).

The 42-residue stretch at Cys-364–Leu-405 folds into the HNH domain.

It belongs to the Rv1128c/1148c/1588c/1702c/1945/3466 family.

This is an uncharacterized protein from Mycobacterium tuberculosis (strain CDC 1551 / Oshkosh).